Consider the following 234-residue polypeptide: MSTYGKVYLVSGNKGKLAEVQSYLAHANIVVEAVKFDLPETQNSSAEKISWDKAVEAYRVVNKMPVGEPLRHGGTPVLVDDTSLEFDALCGLPGPYIKWFLDRLGVEGLLKMVKGFAAPGEKDSGAAAPAHRGANAVCIISLCHGVEEATGQPLVEQFRGVCRGALPPVPRGGVGFGWDSIFAPEAQTPAYAKTFAEMSVEEKNTLSHRAKALKMLTEYLKTHALELRGTKLVA.

11–16 (SGNKGK) provides a ligand contact to ITP. Glutamate 40 serves as a coordination point for Mg(2+). Residues lysine 53, 81–82 (DT), lysine 98, 176–179 (FGWD), lysine 203, and 208–209 (HR) each bind ITP.

Belongs to the HAM1 NTPase family. Homodimer. Mg(2+) is required as a cofactor. The cofactor is Mn(2+).

The protein resides in the cytoplasm. It catalyses the reaction ITP + H2O = IMP + diphosphate + H(+). The catalysed reaction is dITP + H2O = dIMP + diphosphate + H(+). It carries out the reaction XTP + H2O = XMP + diphosphate + H(+). Functionally, pyrophosphatase that hydrolyzes non-canonical purine nucleotides such as inosine triphosphate (ITP), deoxyinosine triphosphate (dITP) or xanthosine 5'-triphosphate (XTP) to their respective monophosphate derivatives. The enzyme does not distinguish between the deoxy- and ribose forms. Probably excludes non-canonical purines from RNA and DNA precursor pools, thus preventing their incorporation into RNA and DNA and avoiding chromosomal lesions. The chain is Inosine triphosphate pyrophosphatase from Leishmania major.